Consider the following 335-residue polypeptide: Eukaryotic translation initiation factor 3 subunit I (335 aa).

WD repeat units follow at residues 8–47 (GHER…RLGT), 50–91 (GHQG…KTWD), 145–184 (CAES…LLFN), 189–228 (EPDL…VMKT), and 286–325 (GHFG…FDFT).

This sequence belongs to the eIF-3 subunit I family. As to quaternary structure, component of the eukaryotic translation initiation factor 3 (eIF-3) complex.

The protein resides in the cytoplasm. Component of the eukaryotic translation initiation factor 3 (eIF-3) complex, which is involved in protein synthesis of a specialized repertoire of mRNAs and, together with other initiation factors, stimulates binding of mRNA and methionyl-tRNAi to the 40S ribosome. The eIF-3 complex specifically targets and initiates translation of a subset of mRNAs involved in cell proliferation. The protein is Eukaryotic translation initiation factor 3 subunit I (tif34) of Sclerotinia sclerotiorum (strain ATCC 18683 / 1980 / Ss-1) (White mold).